The following is a 574-amino-acid chain: MELPILKANAITTILAAVTFCFASSQNITEEFYQSTCSAVSKGYLSALRTGWYTSVITIELSNIKENKCNGTDAKVKLINQELDKYKNAVTELQLLMQSTTAANNRARRELPRFMNYTLNNTKKTNVTLSKKRKRRFLGFLLGVGSAIASGIAVSKVLHLEGEVNKIKSALLSTNKAVVSLSNGVSVLTSKVLDLKNYIDKQLLPIVNKQSCRISNIETVIEFQQKNNRLLEITREFSVNAGVTTPVSTYMLTNSELLSLINDMPITNDQKKLMSNNVQIVRQQSYSIMSIIKEEVLAYVVQLPLYGVIDTPCWKLHTSPLCTTNTKEGSNICLTRTDRGWYCDNAGSVSFFPQAETCKVQSNRVFCDTMNSLTLPSEVNLCNVDIFNPKYDCKIMTSKTDVSSSVITSLGAIVSCYGKTKCTASNKNRGIIKTFSNGCDYVSNKGVDTVSVGNTLYYVNKQEGKSLYVKGEPIINFYDPLVFPSDEFDASISQVNEKINQSLAFIRKSDELLHHVNAGKSTTNIMITTIIIVIIVILLSLIAVGLLLYCKARSTPVTLSKDQLSGINNIAFSN.

The signal sequence occupies residues 1–25 (MELPILKANAITTILAAVTFCFASS). Over 26 to 524 (QNITEEFYQS…HVNAGKSTTN (499 aa)) the chain is Extracellular. Residues Asn-27 and Asn-70 are each glycosylated (N-linked (GlcNAc...) asparagine; by host). 7 disulfide bridges follow: Cys-37-Cys-439, Cys-69-Cys-212, Cys-313-Cys-343, Cys-322-Cys-333, Cys-358-Cys-367, Cys-382-Cys-393, and Cys-416-Cys-422. Positions 76-96 (VKLINQELDKYKNAVTELQLL) form a coiled coil. Residues Asn-116, Asn-120, and Asn-126 are each glycosylated (N-linked (GlcNAc...) asparagine; by host). The tract at residues 137–157 (FLGFLLGVGSAIASGIAVSKV) is fusion peptide. Positions 158–209 (LHLEGEVNKIKSALLSTNKAVVSLSNGVSVLTSKVLDLKNYIDKQLLPIVNK) form a coiled coil. Residues 481–516 (LVFPSDEFDASISQVNEKINQSLAFIRKSDELLHHV) adopt a coiled-coil conformation. Asn-500 carries an N-linked (GlcNAc...) asparagine; by host glycan. A helical membrane pass occupies residues 525 to 550 (IMITTIIIVIIVILLSLIAVGLLLYC). Cys-550 carries S-palmitoyl cysteine; by host lipidation. Residues 551–574 (KARSTPVTLSKDQLSGINNIAFSN) are Cytoplasmic-facing.

The protein belongs to the paramyxoviruses fusion glycoprotein family. In terms of assembly, homotrimer. Heterodimer with fusion protein F2; disulfide-linked. Interacts with host NCL; this interaction plays a role in viral entry into the host cell. As a heterodimer with F2, interacts with host heparan sulfate. As a heterodimer with F2, interacts with host IGF1R; this interaction activates PRKCZ/PKCzeta that recruits NCL/nucleolin from the host nucleus to the plasma membrane. Part of a complex composed of F1, F2 and G glycoproteins. As a heterodimer with F2, interacts with host RHOA; this interaction facilitates virus-induced syncytium formation. As to quaternary structure, homotrimer. Heterodimer with fusion protein F1; disulfide-linked. As a heterodimer with F1, interacts with host heparan sulfate. As a heterodimer with F1, interacts with host IGF1R; this interaction activates PRKCZ/PKCzeta that recruits NCL/nucleolin from the host nucleus to the plasma membrane. Part of a complex composed of F1, F2 and G glycoproteins. As a heterodimer with F1, interacts with host RHOA; this interaction facilitates virus-induced syncytium formation. Post-translationally, the F glycoprotein is synthesized as a F0 inactive precursor that is heavily N-glycosylated and processed at two sites by a host furin-like protease probably in the Golgi. The cleavage site between p27 and F1 may occur after endocytosis to yield the mature F1 and F2 proteins. Both cleavages are required for membrane fusion and p27 is released from the processed protein.

It is found in the host Golgi apparatus membrane. Its subcellular location is the virion membrane. The protein resides in the host cell membrane. Inactive precursor that is cleaved at two sites by a furin-like protease to give rise to the mature F1 and F2 fusion glycoproteins. Its function is as follows. Class I viral fusion protein. Under the current model, the protein has at least 3 conformational states: pre-fusion native state, pre-hairpin intermediate state, and post-fusion hairpin state. During viral and plasma cell membrane fusion, the coiled coil regions assume a trimer-of-hairpins structure, positioning the fusion peptide in close proximity to the C-terminal region of the ectodomain. The formation of this structure appears to drive apposition and subsequent fusion of viral and cellular membranes leading to delivery of the nucleocapsid into the cytoplasm. This fusion is pH independent and occurs at the plasma or endosomal membrane. The trimer of F1-F2 (F protein) also facilitates the attachment to host cell by binding to host heparan sulfate. F protein is involved in the entry into the host cell through the interaction with host IGF1R. This interaction activates PRKCZ/PKCzeta that recruits host NCL/nucleolin to the apical cell surface where it can bind fusion glycoprotein F1. Later in infection, F protein expressed at the plasma membrane of infected cells can mediate fusion with adjacent cells to form syncytia, a cytopathic effect that could lead to tissue necrosis. F protein may trigger p53-dependent apoptosis. In terms of biological role, major determinant of the species specificity of RSV infection. The trimer of F1-F2 (F protein) also facilitates the attachment to host cell by binding to host heparan sulfate. F protein is involved in the entry into the host cell through the interaction with host IGF1R. This interaction activates PRKCZ/PKCzeta that recruits host NCL/nucleolin to the apical cell surface where it can bind fusion glycoprotein F1. Later in infection, F protein expressed at the plasma membrane of infected cells can mediate fusion with adjacent cells to form syncytia, a cytopathic effect that could lead to tissue necrosis. F protein seems to trigger p53-dependent apoptosis. The sequence is that of Fusion glycoprotein F0 (F) from Homo sapiens (Human).